The primary structure comprises 571 residues: Dual specificity testis-specific protein kinase 2 (571 aa).

The region spanning 58–313 (DFTCEKIGSG…EIGKTLEEIL (256 aa)) is the Protein kinase domain. Residues 64-72 (IGSGFFSEV) and Lys-87 contribute to the ATP site. Asp-176 acts as the Proton acceptor in catalysis. Residue Ser-219 is modified to Phosphoserine; by autocatalysis. A phosphoserine mark is found at Ser-369, Ser-456, and Ser-460. Positions 521–571 (ENGFGSRPQGTSPCPAGASEEMEVEERPAGSTPATFSTSGIGLQTQGKQDG) are disordered. Residues 552–571 (TPATFSTSGIGLQTQGKQDG) show a composition bias toward polar residues.

It belongs to the protein kinase superfamily. TKL Ser/Thr protein kinase family. Mg(2+) serves as cofactor. Mn(2+) is required as a cofactor. In terms of tissue distribution, predominantly expressed in testis and prostate. Found predominantly in non-germinal Sertoli cells.

The protein localises to the nucleus. It carries out the reaction L-seryl-[protein] + ATP = O-phospho-L-seryl-[protein] + ADP + H(+). The catalysed reaction is L-threonyl-[protein] + ATP = O-phospho-L-threonyl-[protein] + ADP + H(+). It catalyses the reaction L-tyrosyl-[protein] + ATP = O-phospho-L-tyrosyl-[protein] + ADP + H(+). Its activity is regulated as follows. Activated by autophosphorylation on Ser-219. Functionally, dual specificity protein kinase activity catalyzing autophosphorylation and phosphorylation of exogenous substrates on both serine/threonine and tyrosine residues. Phosphorylates cofilin at 'Ser-3'. May play an important role in spermatogenesis. This Homo sapiens (Human) protein is Dual specificity testis-specific protein kinase 2 (TESK2).